We begin with the raw amino-acid sequence, 551 residues long: MTGSLASNYASWKQLQEIYDKDRAKIVLRDLFAADPQRFSKLSATYNSQSGPGVQILLDYSKHLVTEPILQKLFNLLREAKVEDARDKMFSGEHINTSEDRAVLHVALRNFNDFSIKEEGVDEVSKVLQHMKEFSESVRSGQWKGYTGKTINTIVNIGIGGSDLGPVMVTEALKPFSKRDLNAHFVSNIDGTHIAETLRLCDPERTLFIVASKTFTTQETITNAESARDWFLGFAKDKAHVAKHFVALSTNTSAVTAFGISEANMFQFWDWVGGRYSLWSAIGLSIALVIGFDNFEKLLRGAHAMDQHFKTTPLEKNLPAIMAALGIWCNDFYGAQTLALLPYDQYLHKFADYFQQGDMESNGKFITKNGDRVNYQTGPIIWGASGTNGQHSFYQLIHQGTKIIPADFMAPATSHNPIANSKHHRILLSNFFAQPEALAFGKTEEEVRKELGQNASEALVKSKVFEGNRPSSSLMFDKLDPATLGALIALYEHKIFVQGVVWGINSFDQMGVELGKVLAKQILAQLDKSDDVKGHDSSVRHLPFILQVDHC.

Residues 161-162, 212-217, Gln-356, Glu-360, His-391, and Lys-516 each bind D-glucose 6-phosphate; these read GS and SKTFTT. The Proton donor role is filled by Glu-360. Residues His-391 and Lys-516 contribute to the active site.

This sequence belongs to the GPI family. Homodimer.

The protein resides in the cytoplasm. It localises to the cytosol. The enzyme catalyses alpha-D-glucose 6-phosphate = beta-D-fructose 6-phosphate. It functions in the pathway carbohydrate degradation; glycolysis; D-glyceraldehyde 3-phosphate and glycerone phosphate from D-glucose: step 2/4. Functionally, in the cytoplasm, catalyzes the conversion of glucose-6-phosphate to fructose-6-phosphate, the second step in glycolysis, and the reverse reaction during gluconeogenesis. The chain is Glucose-6-phosphate isomerase (gpi1) from Agaricus bisporus (White button mushroom).